A 90-amino-acid polypeptide reads, in one-letter code: Small ribosomal subunit protein bS20 (90 aa).

It belongs to the bacterial ribosomal protein bS20 family.

In terms of biological role, binds directly to 16S ribosomal RNA. In Rickettsia canadensis (strain McKiel), this protein is Small ribosomal subunit protein bS20.